Reading from the N-terminus, the 257-residue chain is uncharacterized protein (257 aa).

The next 6 helical transmembrane spans lie at 5–25 (FLYF…IVTF), 29–49 (LALV…GTLI), 53–73 (TLSF…GDWI), 146–166 (LGCI…GIAI), 180–200 (IQFL…WKLW), and 216–236 (VNLC…MIYI).

This sequence belongs to the DedA family.

The protein resides in the cell membrane. This is an uncharacterized protein from Buchnera aphidicola subsp. Baizongia pistaciae (strain Bp).